The sequence spans 2211 residues: MPSFFPVFSGLGSGSVFSEENVGRAEENALSPECAVLLQSCHRTFREQVSDAIARNILPEDSIDLDDFAEPASLIRPLSKYSRNVVMQHAALYLHQILAYMTSQKELGNLIGSAGFCTGLLPAAVAAASQTSVITLISQSHHFFQVALWIGIRSEQYRVDHLTNDTQDADGESMLPCSYVLEGVSEAAAQDLLHKTNMGNEVFVSAILSPTRVTISGIPTKLSTFISKHLPANCRTTVAVVHSLYHHESLLEVRNLVMADLERQDTLLQARVELSAPILSTKTGKPLALSSVTTLEQVACAILDLIFIEKVDWLNLQQSIVSHTSQDALDRPINIVNYGPGLGMAPSAFAQAQEKDVCIMDAAKISKGSFQNSGASRLAWDDIAIVGMAVELPGASDADTLWQNLVDGYQACSEIPPSRFNVNDYNNGKGSRTLNTKYGNFLENPFLFDAEHFGISRREAKSMDPQQRILLQTAYRALEDAGYVPDTTTSSARDTFGCWIGNATLDYVDNLRSDIDVYYSTGTLRAFLSARISYVFGWSGPSITLDTACSSSIVALHQAARSILAGDCRSALVGAANTITSPDMYLGLDRAHFLSPSGQCKAFDASADGYCRAEGCGVFVIKRLSDALAEGDRIHGVIKAIEINQSGNTHSITHPHVPTQEALFDKMFRESRINPHEISVVEMHGTGTQAGDPNEVESVRRALCKARSPLNPVYLTSLKANIGHAEAVSGIAGLAKLILMTRNGYIPPQVSLKTLNPRIRPLGVDGAAIDANGTEWPRAGPKKARMSMLNNFGAGGSNAAVIIGEHLSQDESEAQQPACGATIFVCGVSAKNDRALVKLQETVADYLTSAGQSRKPPSLADVCATLTSRRQMYNHRVAVVASSLEELAENLRSASSHNVSKSICEAPEAVFIFSGQGSQYLGMGRELIEQYEDFAHTVNVCDGWLVKNNYPSCLAVITGEQRESEDDKVDAHTWQSFQSAIYVIEVALAKLLESWGIRPQAVAGHSLGEYAALVTAGVIRLMDGLKLVAHRAKLMMEQCDLGQTSMLAVNCSAAVITSIIEASTDFEGLAISCNNSETDCVVGGPVPQLVLLKKHLTDRAQVRSKLLDVPMAFHTAAMDPILEEFTAFAAREVRVFPPTLPVVSNVLGRTVAVGEQAFSPEYFAKQCRGTVAFDDGIKHFLALGDCESTPYRWIEIGPHPSVQPMLRGRLGKAATSHIQLTTLKKNVPPASTLSQLLSHFYQTSSGVNWRSVFSRNAHRRFKLIQLPGMPFFPSEFHVPYREMAGEPASTSQSSGDAASNVVPNSFAVHAIQKLSHGASNSCAIYETPAVLLKEFIEGHLVCGYALCPASVYHEMVLAALNDCQSAAGSSVVWGLSKVSYCAPMVYDGNSNQVLRVVITPRLTLPDRYDFAVMSYVAGTDPNERSTVHCRGVVKQSNMASAELKYSRLQASMKGSMDGLKHVGQLGAPAASCVQVFSKRAMYEKIFTRVVEYSDPYQKVETIRIREDTGEALATCVSPAPYLARDSSIPASHAIFMDVLLHVAGFVSNLNLPNDVMGICKEVGGATTLRAPVVRDGACAPFDVYCSTFDTQDSDGRSFTISNAYAVDSSGVMAVFKGMVFQHVKIPLIEQALKRATRSSPNAAVSASHPAQPKRRNDVTSFVNAQSVERMALPRAAAPVRAAPEVSVPELVAKVCGLDAGQLGVDSRLDAHGVDSLMGIEIAAALSSALGVDVLPDTLGSCDTVGDIERLCEALSPTPVGNDVDNDSPTPGSERGSDSAISTPASVSTVDASSIDMVQIVAELCGARAEAVSPDSELRALGVDSLMFLELADRLQDLDRGIALSSNDLADCQTIGDIERLIVKRPGTPAYQSGISTKIYPEAVHASSEAVRLSAQQPATQISLLASEEAVLPQIERLLHLSQQPEEIQVGSLDRKFSGKSPLFLIHDGSGICTHYRGLRPLGRRVLALHDPKFLIQSSKQRSWASLTTMANEYASSISSTMGMTGGEDCILGGWSFGGVVAFEAARILMSRGHRVKGVVLIDSPPPIGHIPLSESIISAVTAQPAEKDAAAGSTTASKCVSPVASAIRKLVQQSFRICAGLIGDFGTSAELQQRGLSNKPVGPVPRVILLRSAVGWTPPRGYTGAAVEEMENPWLQDRRDRSLATAGWEILTGGPIQCLDIPGNHFQVFDAPNIAAVSAALVDACSEFELK.

The tract at residues 44 to 246 (TFREQVSDAI…TVAVVHSLYH (203 aa)) is N-terminal acylcarrier protein transacylase domain (SAT). A Ketosynthase family 3 (KS3) domain is found at 380–805 (WDDIAIVGMA…GSNAAVIIGE (426 aa)). Catalysis depends on for beta-ketoacyl synthase activity residues C549, H684, and H724. Positions 910–1228 (VFIFSGQGSQ…QLTTLKKNVP (319 aa)) are malonyl-CoA:ACP transacylase (MAT) domain. The active-site For acyl/malonyl transferase activity is the S1006. Positions 1309–1440 (HAIQKLSHGA…GVVKQSNMAS (132 aa)) are N-terminal hotdog fold. Residues 1309–1629 (HAIQKLSHGA…FQHVKIPLIE (321 aa)) form the PKS/mFAS DH domain. The interval 1334–1573 (EFIEGHLVCG…GATTLRAPVV (240 aa)) is product template (PT) domain. H1339 acts as the Proton acceptor; for dehydratase activity in catalysis. Positions 1473–1629 (VQVFSKRAMY…FQHVKIPLIE (157 aa)) are C-terminal hotdog fold. The Proton donor; for dehydratase activity role is filled by D1537. Carrier domains are found at residues 1681–1755 (AAPE…EALS) and 1787–1865 (STVD…VKRP). The residue at position 1715 (S1715) is an O-(pantetheine 4'-phosphoryl)serine. A disordered region spans residues 1755–1786 (SPTPVGNDVDNDSPTPGSERGSDSAISTPASV). O-(pantetheine 4'-phosphoryl)serine is present on S1824. The interval 1937–2204 (SGKSPLFLIH…AAVSAALVDA (268 aa)) is thioesterase (TE) domain.

The catalysed reaction is 3 malonyl-CoA + acetyl-CoA + 2 H(+) = orsellinate + 3 CO2 + 4 CoA. It participates in secondary metabolite biosynthesis. In terms of biological role, non-reducing polyketide synthase; part of the gene cluster that mediates the biosynthesis of the bibenzoquinone oosporein, a metabolite required for fungal virulence that acts by evading host immunity to facilitate fungal multiplication in insects. The non-reducing polyketide synthase OpS1 produces orsellinic acid by condensing acetyl-CoA with 3 malonyl-CoA units. Orsellinic acid is then hydroxylated to benzenetriol by the hydroxylase OpS4. The intermediate is oxidized either nonenzymatically to 5,5'-dideoxy-oosporein or enzymatically to benzenetetrol by the oxidoreductase OpS7. The latter is further dimerized to oosporein by the catalase OpS5. OpS6 probably functions en route for protecting cells against oxidative stress by scavenging any leaked free radical form of benzenetetrol by activating the thiol group of glutathione. The protein is Orsellinic acid synthase of Beauveria bassiana (strain ARSEF 2860) (White muscardine disease fungus).